The sequence spans 427 residues: Enolase (427 aa).

Q163 contributes to the (2R)-2-phosphoglycerate binding site. The active-site Proton donor is E205. The Mg(2+) site is built by D242, E288, and D315. (2R)-2-phosphoglycerate contacts are provided by K340, R369, S370, and K391. The active-site Proton acceptor is K340.

Belongs to the enolase family. The cofactor is Mg(2+).

The protein resides in the cytoplasm. It localises to the secreted. The protein localises to the cell surface. The catalysed reaction is (2R)-2-phosphoglycerate = phosphoenolpyruvate + H2O. It participates in carbohydrate degradation; glycolysis; pyruvate from D-glyceraldehyde 3-phosphate: step 4/5. Catalyzes the reversible conversion of 2-phosphoglycerate (2-PG) into phosphoenolpyruvate (PEP). It is essential for the degradation of carbohydrates via glycolysis. The sequence is that of Enolase from Amoebophilus asiaticus (strain 5a2).